A 130-amino-acid polypeptide reads, in one-letter code: NADH-quinone oxidoreductase subunit A (130 aa).

3 helical membrane passes run Ala15–Ile35, Phe67–Ala87, and Trp95–Leu115.

This sequence belongs to the complex I subunit 3 family. As to quaternary structure, NDH-1 is composed of 14 different subunits. Subunits NuoA, H, J, K, L, M, N constitute the membrane sector of the complex.

Its subcellular location is the cell inner membrane. The enzyme catalyses a quinone + NADH + 5 H(+)(in) = a quinol + NAD(+) + 4 H(+)(out). In terms of biological role, NDH-1 shuttles electrons from NADH, via FMN and iron-sulfur (Fe-S) centers, to quinones in the respiratory chain. The immediate electron acceptor for the enzyme in this species is believed to be ubiquinone. Couples the redox reaction to proton translocation (for every two electrons transferred, four hydrogen ions are translocated across the cytoplasmic membrane), and thus conserves the redox energy in a proton gradient. This chain is NADH-quinone oxidoreductase subunit A, found in Rhodopseudomonas palustris (strain BisA53).